A 96-amino-acid polypeptide reads, in one-letter code: DNA-binding protein HmvA (96 aa).

Residues 52–55 (KTIK) are interaction with DNA.

It belongs to the archaeal histone HMF family. In terms of assembly, homodimer. Dimers then assemble into higher oligomers, with the DNA wrapped around the protein core.

Its subcellular location is the cytoplasm. The protein resides in the chromosome. In terms of biological role, binds and compact DNA (95 to 150 base pairs) to form nucleosome-like structures that contain positive DNA supercoils. Increases the resistance of DNA to thermal denaturation (in vitro). This Methanocaldococcus jannaschii (strain ATCC 43067 / DSM 2661 / JAL-1 / JCM 10045 / NBRC 100440) (Methanococcus jannaschii) protein is DNA-binding protein HmvA (hmvA).